A 319-amino-acid polypeptide reads, in one-letter code: Oxaloacetate tautomerase fahd2, mitochondrial (319 aa).

A mitochondrion-targeting transit peptide spans 1–31; the sequence is MLTQTRVALRVLKNAHLTLPKRNISQSPALS. Residues glutamate 164, glutamate 166, and aspartate 195 each contribute to the Mg(2+) site.

Belongs to the FAH family. Requires Mg(2+) as cofactor. Mn(2+) is required as a cofactor.

It is found in the mitochondrion. The enzyme catalyses oxaloacetate = enol-oxaloacetate. In terms of biological role, tautomerase that converts enol-oxaloacetate, a strong inhibitor of succinate dehydrogenase, to the physiological keto form of oxaloacetate. It is thereby required to maximize aerobic respiration efficiency by preventing succinate dehydrogenase inhibition. The protein is Oxaloacetate tautomerase fahd2, mitochondrial (fahd2) of Xenopus laevis (African clawed frog).